A 215-amino-acid polypeptide reads, in one-letter code: Ribosome maturation factor RimP (215 aa).

Positions 180–215 (KDNRARKEAKKRRGEPDDDVPEGAEADATEEHEQES) are disordered. The span at 195 to 207 (PDDDVPEGAEADA) shows a compositional bias: acidic residues.

This sequence belongs to the RimP family.

It localises to the cytoplasm. Functionally, required for maturation of 30S ribosomal subunits. This is Ribosome maturation factor RimP from Mesorhizobium japonicum (strain LMG 29417 / CECT 9101 / MAFF 303099) (Mesorhizobium loti (strain MAFF 303099)).